Consider the following 456-residue polypeptide: Chromosomal replication initiator protein DnaA (456 aa).

A domain I, interacts with DnaA modulators region spans residues 1–83 (MKLKILHFTS…DAFEEESNNG (83 aa)). The tract at residues 83–116 (GVRPEIHIKVKEKKENVKSLKNNKSMLYFNTNGL) is domain II. The tract at residues 117 to 331 (SLNPFYTFEN…GILSTINAHI (215 aa)) is domain III, AAA+ region. Residues Gly-161, Gly-163, Lys-164, and Thr-165 each contribute to the ATP site. The tract at residues 332–456 (NLSPESSSLK…SKIQQSLDSV (125 aa)) is domain IV, binds dsDNA.

It belongs to the DnaA family. As to quaternary structure, oligomerizes as a right-handed, spiral filament on DNA at oriC.

The protein resides in the cytoplasm. Plays an essential role in the initiation and regulation of chromosomal replication. ATP-DnaA binds to the origin of replication (oriC) to initiate formation of the DNA replication initiation complex once per cell cycle. Binds the DnaA box (a 9 base pair repeat at the origin) and separates the double-stranded (ds)DNA. Forms a right-handed helical filament on oriC DNA; dsDNA binds to the exterior of the filament while single-stranded (ss)DNA is stabiized in the filament's interior. The ATP-DnaA-oriC complex binds and stabilizes one strand of the AT-rich DNA unwinding element (DUE), permitting loading of DNA polymerase. After initiation quickly degrades to an ADP-DnaA complex that is not apt for DNA replication. Binds acidic phospholipids. This chain is Chromosomal replication initiator protein DnaA, found in Helicobacter hepaticus (strain ATCC 51449 / 3B1).